The following is a 188-amino-acid chain: Elongation factor P (188 aa).

The protein belongs to the elongation factor P family.

The protein resides in the cytoplasm. It functions in the pathway protein biosynthesis; polypeptide chain elongation. Functionally, involved in peptide bond synthesis. Stimulates efficient translation and peptide-bond synthesis on native or reconstituted 70S ribosomes in vitro. Probably functions indirectly by altering the affinity of the ribosome for aminoacyl-tRNA, thus increasing their reactivity as acceptors for peptidyl transferase. In Rhodopseudomonas palustris (strain BisB5), this protein is Elongation factor P.